Consider the following 153-residue polypeptide: MAPKAEKKPAAKKPAEEEPAAEKAEKAPAGKKPKAEKRLPAGKAEKSSGEGKKAGRKKAKKSVETYKIYIFKVLKQVHPDIGISSKAMSIMNSFINDIFEKLAGESAKLARYNKKPTITSREIQTSVRLVLPGELAKHAVSEGTKAVTKFTSA.

Composition is skewed to basic and acidic residues over residues 1-28 (MAPK…EKAP) and 36-53 (EKRL…EGKK). The disordered stretch occupies residues 1-61 (MAPKAEKKPA…KKAGRKKAKK (61 aa)). An N6-acetyllysine mark is found at Lys-7 and Lys-37. Lys-149 participates in a covalent cross-link: Glycyl lysine isopeptide (Lys-Gly) (interchain with G-Cter in ubiquitin).

Belongs to the histone H2B family. The nucleosome is a histone octamer containing two molecules each of H2A, H2B, H3 and H4 assembled in one H3-H4 heterotetramer and two H2A-H2B heterodimers. The octamer wraps approximately 147 bp of DNA. In terms of processing, can be acetylated to form H2BK6ac and H2BK33ac. Monoubiquitinated by BRE1 to form H2BK143ub1 and deubiquitinated by UBP26. Required for heterochromatic histone H3 di- and trimethylation at H3K4me. May give a specific tag for epigenetic transcriptional activation.

It is found in the nucleus. The protein localises to the chromosome. Core component of nucleosome. Nucleosomes wrap and compact DNA into chromatin, limiting DNA accessibility to the cellular machineries which require DNA as a template. Histones thereby play a central role in transcription regulation, DNA repair, DNA replication and chromosomal stability. DNA accessibility is regulated via a complex set of post-translational modifications of histones, also called histone code, and nucleosome remodeling. The polypeptide is Histone H2B.10 (H2B.10) (Oryza sativa subsp. indica (Rice)).